The chain runs to 386 residues: Phosphoglycerate kinase (386 aa).

Substrate contacts are provided by residues 21 to 23 (DLN), R36, 59 to 62 (HLGR), R113, and R146. Residues K197, E314, and 340–343 (GGDT) each bind ATP.

It belongs to the phosphoglycerate kinase family. In terms of assembly, monomer.

It localises to the cytoplasm. The enzyme catalyses (2R)-3-phosphoglycerate + ATP = (2R)-3-phospho-glyceroyl phosphate + ADP. Its pathway is carbohydrate degradation; glycolysis; pyruvate from D-glyceraldehyde 3-phosphate: step 2/5. The protein is Phosphoglycerate kinase of Marinobacter nauticus (strain ATCC 700491 / DSM 11845 / VT8) (Marinobacter aquaeolei).